A 94-amino-acid chain; its full sequence is Small ribosomal subunit protein uS19 (94 aa).

Belongs to the universal ribosomal protein uS19 family.

Its function is as follows. Protein S19 forms a complex with S13 that binds strongly to the 16S ribosomal RNA. This chain is Small ribosomal subunit protein uS19, found in Clostridium novyi (strain NT).